The chain runs to 176 residues: uncharacterized protein (176 aa).

Residues 87 to 100 show a composition bias toward low complexity; it reads ASASSQLRASRVQS. Positions 87 to 109 are disordered; the sequence is ASASSQLRASRVQSGTRQSARAG.

This is an uncharacterized protein from Homo sapiens (Human).